Reading from the N-terminus, the 90-residue chain is DNA-directed RNA polymerase subunit omega (90 aa).

The disordered stretch occupies residues 69–90 (RQEQQEQDAAELAAVSSITHNR).

Belongs to the RNA polymerase subunit omega family. In terms of assembly, the RNAP catalytic core consists of 2 alpha, 1 beta, 1 beta' and 1 omega subunit. When a sigma factor is associated with the core the holoenzyme is formed, which can initiate transcription.

The enzyme catalyses RNA(n) + a ribonucleoside 5'-triphosphate = RNA(n+1) + diphosphate. In terms of biological role, promotes RNA polymerase assembly. Latches the N- and C-terminal regions of the beta' subunit thereby facilitating its interaction with the beta and alpha subunits. The sequence is that of DNA-directed RNA polymerase subunit omega from Aliivibrio fischeri (strain ATCC 700601 / ES114) (Vibrio fischeri).